The following is a 188-amino-acid chain: Probable nicotinate-nucleotide adenylyltransferase (188 aa).

Belongs to the NadD family.

It catalyses the reaction nicotinate beta-D-ribonucleotide + ATP + H(+) = deamido-NAD(+) + diphosphate. It participates in cofactor biosynthesis; NAD(+) biosynthesis; deamido-NAD(+) from nicotinate D-ribonucleotide: step 1/1. In terms of biological role, catalyzes the reversible adenylation of nicotinate mononucleotide (NaMN) to nicotinic acid adenine dinucleotide (NaAD). This chain is Probable nicotinate-nucleotide adenylyltransferase, found in Listeria monocytogenes serotype 4a (strain HCC23).